Here is a 350-residue protein sequence, read N- to C-terminus: RING finger protein 44 (350 aa).

An RING-type; atypical zinc finger spans residues 298 to 339 (CVVCFSDFEVRQLLRVLPCNHEFHAKCVDKWLKANRTCPICR).

This chain is RING finger protein 44 (Rnf44), found in Rattus norvegicus (Rat).